The chain runs to 123 residues: MRKPQRGYARQDRVKEQIMRELAELVRTGLKDPRAGFITVNEVEVTRDYSHATVFYTVLNQDAREITEEVLEHARGHLRSELAKRIKLFKIPELHFKYDESLERGLNLSALIDQVAAEKPVED.

It belongs to the RbfA family. Monomer. Binds 30S ribosomal subunits, but not 50S ribosomal subunits or 70S ribosomes.

It localises to the cytoplasm. Its function is as follows. One of several proteins that assist in the late maturation steps of the functional core of the 30S ribosomal subunit. Associates with free 30S ribosomal subunits (but not with 30S subunits that are part of 70S ribosomes or polysomes). Required for efficient processing of 16S rRNA. May interact with the 5'-terminal helix region of 16S rRNA. This chain is Ribosome-binding factor A, found in Neisseria meningitidis serogroup A / serotype 4A (strain DSM 15465 / Z2491).